The chain runs to 89 residues: UPF0223 protein BCB4264_A4064 (89 aa).

The protein belongs to the UPF0223 family.

The chain is UPF0223 protein BCB4264_A4064 from Bacillus cereus (strain B4264).